Reading from the N-terminus, the 326-residue chain is tRNA uridine(34) hydroxylase (326 aa).

A Rhodanese domain is found at Ala123 to Ser217. Cys177 (cysteine persulfide intermediate) is an active-site residue. Residues Ala293–Ala326 are disordered. The span at Arg311–Ala326 shows a compositional bias: basic and acidic residues.

The protein belongs to the TrhO family.

The enzyme catalyses uridine(34) in tRNA + AH2 + O2 = 5-hydroxyuridine(34) in tRNA + A + H2O. Functionally, catalyzes oxygen-dependent 5-hydroxyuridine (ho5U) modification at position 34 in tRNAs. The protein is tRNA uridine(34) hydroxylase of Vibrio campbellii (strain ATCC BAA-1116).